Reading from the N-terminus, the 428-residue chain is GTPase Obg (428 aa).

The 158-residue stretch at 1-158 folds into the Obg domain; that stretch reads MFVDQVKIYV…RDVILELKVL (158 aa). The region spanning 159–329 is the OBG-type G domain; sequence ADVGLVGFPS…LLFEVANLIE (171 aa). GTP is bound by residues 165–172, 190–194, 212–215, 282–285, and 310–312; these read GFPSVGKS, FTTIV, DLPG, NKMD, and SAV. Mg(2+) is bound by residues Ser-172 and Thr-192. Residues 350–428 enclose the OCT domain; the sequence is KFETEGVKFD…ILEYEFEFID (79 aa).

This sequence belongs to the TRAFAC class OBG-HflX-like GTPase superfamily. OBG GTPase family. In terms of assembly, monomer. Mg(2+) serves as cofactor.

The protein resides in the cytoplasm. An essential GTPase which binds GTP, GDP and possibly (p)ppGpp with moderate affinity, with high nucleotide exchange rates and a fairly low GTP hydrolysis rate. Plays a role in control of the cell cycle, stress response, ribosome biogenesis and in those bacteria that undergo differentiation, in morphogenesis control. This Bacillus cereus (strain AH820) protein is GTPase Obg.